The sequence spans 625 residues: Glucose dehydrogenase [FAD, quinone] (625 aa).

Positions 1–42 (MSASASACDCLVGVPTGPTLASTCGGSAFMLFMGLLEVFIRS) are cleaved as a signal peptide. 66 to 95 (DFIVIGGGSAGSVVASRLSEVPQWKVLLIE) contributes to the FAD binding site. The active-site Proton acceptor is H544. Residue U613 is a non-standard amino acid, selenocysteine.

The protein belongs to the GMC oxidoreductase family. FAD is required as a cofactor.

It localises to the secreted. The catalysed reaction is a quinone + D-glucose = D-glucono-1,5-lactone + a quinol. Essential for cuticular modification during development. This is Glucose dehydrogenase [FAD, quinone] (Gld) from Drosophila melanogaster (Fruit fly).